We begin with the raw amino-acid sequence, 488 residues long: Mannosylglycerate hydrolase MGH1 (488 aa).

Substrate contacts are provided by residues Y94, 98-101 (WNWD), Y146, Q167, and G227. Residue D229 is the Proton donor of the active site. Substrate contacts are provided by residues R262 and 415 to 416 (YW). E459 functions as the Proton acceptor in the catalytic mechanism.

This sequence belongs to the glycosyl hydrolase 63 family.

The enzyme catalyses (2R)-2-O-(alpha-D-mannosyl)-glycerate + H2O = D-mannose + (R)-glycerate. It catalyses the reaction (2R)-2-O-(alpha-D-glucopyranosyl)-glycerate + H2O = (R)-glycerate + D-glucose. Activity is not dependent on divalent cations, but it is enhanced by Mn(2+). Catalyzes the hydrolysis of alpha-D-mannosyl-glycerate (MG) to D-glycerate and D-mannose. Can also hydrolyze alpha-D-glucopyranosyl-glycerate (GG)with lower efficiency. The protein is Mannosylglycerate hydrolase MGH1 of Selaginella moellendorffii (Spikemoss).